The following is a 662-amino-acid chain: uncharacterized protein (662 aa).

FAD-binding residues include S145, E164, W173, D184, and Y190. Positions 638–662 are disordered; that stretch reads SRLETSGVPREGVQRPGSRLRRRPS.

This sequence belongs to the FAD-binding monooxygenase family. FAD is required as a cofactor.

This is an uncharacterized protein from Sinorhizobium fredii (strain NBRC 101917 / NGR234).